Reading from the N-terminus, the 610-residue chain is Protein mono-ADP-ribosyltransferase PARP6 (610 aa).

The PARP catalytic domain maps to 374 to 600; it reads EMTQGSYLEI…QDPKIQKEIM (227 aa). Position 580 is an ADP-ribosyl aspartic acid (D580).

The protein belongs to the ARTD/PARP family. In terms of processing, auto-mono-ADP-ribosylated.

It catalyses the reaction L-aspartyl-[protein] + NAD(+) = 4-O-(ADP-D-ribosyl)-L-aspartyl-[protein] + nicotinamide. The enzyme catalyses L-cysteinyl-[protein] + NAD(+) = S-(ADP-D-ribosyl)-L-cysteinyl-[protein] + nicotinamide + H(+). Functionally, mono-ADP-ribosyltransferase that mediates mono-ADP-ribosylation of target proteins. In Pongo abelii (Sumatran orangutan), this protein is Protein mono-ADP-ribosyltransferase PARP6.